The primary structure comprises 356 residues: Dihydroorotate dehydrogenase (quinone) (356 aa).

FMN-binding positions include 66-70 (AGFDK) and T90. Residue K70 coordinates substrate. Position 115 to 119 (115 to 119 (NRMGF)) interacts with substrate. N143 and N176 together coordinate FMN. Residue N176 participates in substrate binding. S179 serves as the catalytic Nucleophile. N181 provides a ligand contact to substrate. K212 and T240 together coordinate FMN. 241–242 (NT) provides a ligand contact to substrate. FMN contacts are provided by residues G264, G293, and 314-315 (YT).

This sequence belongs to the dihydroorotate dehydrogenase family. Type 2 subfamily. Monomer. Requires FMN as cofactor.

The protein localises to the cell membrane. It carries out the reaction (S)-dihydroorotate + a quinone = orotate + a quinol. Its pathway is pyrimidine metabolism; UMP biosynthesis via de novo pathway; orotate from (S)-dihydroorotate (quinone route): step 1/1. Catalyzes the conversion of dihydroorotate to orotate with quinone as electron acceptor. This is Dihydroorotate dehydrogenase (quinone) (pyrD) from Mycobacterium leprae (strain TN).